The primary structure comprises 206 residues: tRNA(Phe) 7-((3-amino-3-carboxypropyl)-4-demethylwyosine(37)-N(4))-methyltransferase 2 (206 aa).

This sequence belongs to the TYW3 family.

It carries out the reaction 4-demethyl-7-[(3S)-3-amino-3-carboxypropyl]wyosine(37) in tRNA(Phe) + S-adenosyl-L-methionine = 7-[(3S)-3-amino-3-carboxypropyl]wyosine(37) in tRNA(Phe) + S-adenosyl-L-homocysteine + H(+). S-adenosyl-L-methionine-dependent methyltransferase that acts as a component of the wyosine derivatives biosynthesis pathway. Probably methylates N-4 position of wybutosine-86 to produce wybutosine-72. In Pyrococcus abyssi (strain GE5 / Orsay), this protein is tRNA(Phe) 7-((3-amino-3-carboxypropyl)-4-demethylwyosine(37)-N(4))-methyltransferase 2.